Consider the following 95-residue polypeptide: Aspartyl/glutamyl-tRNA(Asn/Gln) amidotransferase subunit C (95 aa).

This sequence belongs to the GatC family. Heterotrimer of A, B and C subunits.

The enzyme catalyses L-glutamyl-tRNA(Gln) + L-glutamine + ATP + H2O = L-glutaminyl-tRNA(Gln) + L-glutamate + ADP + phosphate + H(+). It catalyses the reaction L-aspartyl-tRNA(Asn) + L-glutamine + ATP + H2O = L-asparaginyl-tRNA(Asn) + L-glutamate + ADP + phosphate + 2 H(+). In terms of biological role, allows the formation of correctly charged Asn-tRNA(Asn) or Gln-tRNA(Gln) through the transamidation of misacylated Asp-tRNA(Asn) or Glu-tRNA(Gln) in organisms which lack either or both of asparaginyl-tRNA or glutaminyl-tRNA synthetases. The reaction takes place in the presence of glutamine and ATP through an activated phospho-Asp-tRNA(Asn) or phospho-Glu-tRNA(Gln). The protein is Aspartyl/glutamyl-tRNA(Asn/Gln) amidotransferase subunit C of Pseudomonas putida (strain W619).